The chain runs to 332 residues: Biotin synthase (332 aa).

The region spanning H53–R282 is the Radical SAM core domain. 3 residues coordinate [4Fe-4S] cluster: C71, C75, and C78. Positions 115, 147, 207, and 277 each coordinate [2Fe-2S] cluster.

It belongs to the radical SAM superfamily. Biotin synthase family. As to quaternary structure, homodimer. It depends on [4Fe-4S] cluster as a cofactor. The cofactor is [2Fe-2S] cluster.

The catalysed reaction is (4R,5S)-dethiobiotin + (sulfur carrier)-SH + 2 reduced [2Fe-2S]-[ferredoxin] + 2 S-adenosyl-L-methionine = (sulfur carrier)-H + biotin + 2 5'-deoxyadenosine + 2 L-methionine + 2 oxidized [2Fe-2S]-[ferredoxin]. Its pathway is cofactor biosynthesis; biotin biosynthesis; biotin from 7,8-diaminononanoate: step 2/2. Catalyzes the conversion of dethiobiotin (DTB) to biotin by the insertion of a sulfur atom into dethiobiotin via a radical-based mechanism. This Bacillus cereus (strain ATCC 10987 / NRS 248) protein is Biotin synthase.